A 445-amino-acid polypeptide reads, in one-letter code: Cytochrome P450 monooxygenase penB (445 aa).

A heme-binding site is contributed by Cys381.

Belongs to the cytochrome P450 family. It depends on heme as a cofactor.

It participates in secondary metabolite biosynthesis. Its pathway is alkaloid biosynthesis. It functions in the pathway mycotoxin biosynthesis. Its function is as follows. Cytochrome P450 monooxygenase; part of the gene cluster that mediates the biosynthesis of penigequinolones, potent insecticidal alkaloids that contain a highly modified 10-carbon prenyl group. The first stage is catalyzed by the nonribosomal peptide synthetase penN that condenses anthranilic acid and O-methyl-L-tyrosine to produce 4'-methoxycyclopeptin. 4'-methoxycyclopeptin is then converted to 4'-methoxydehydrocyclopeptin by the ketoglutarate-dependent dioxygenase penM through dehydrogenation to form a double bond between C-alpha and C-beta of the O-methyltyrosine side chain. PenM also converts its first product methoxydehydrocyclopeptin to 4'-methoxycyclopenin. The following conversion of 4'methoxycyclopenin into 4'-methoxyviridicatin is catalyzed by the cyclopenase penL. 4'-methoxyviridicatin is the precursor of quinolone natural products, and is further converted to quinolinone B. The prenyltransferase penI then catalyzes the canonical Friedel-Crafts alkylation of quinolinone B with dimethylallyl cation to yield dimethylallyl quinolone, which is subjected to FAD-dependent dehydrogenation by the FAD-linked oxidoreductase penH to yield conjugated aryl diene. The delta(3') double bond then serves as the site of the second alkylation with DMAPP catalyzed by the prenyltransferase penG to yield a carbenium ion intermediate, which can be attacked by H(2)O to yield a styrenyl quinolone containing a C3'-hydroxyprenyl chain, or undergo cyclization to yield yaequinolones J1 and J2. The conversion of the styrenyl quinolone into the tetrahydrofuran-containing yaequinolone C is performed by the FAD-dependent monooxygenase penE and involves epoxidation of the terminal C7'-C8' olefin, followed by epoxide ring opening initiated by the C3' hydroxyl group. The predicted cysteine hydrolase penJ acts as an epoxide hydrolase that enhances the rate of the 5-exo-tet cyclization step, increasing the yield of yaequinolone C. PenF catalyzes the cationic rearrangement of the epoxide formed by penE (before ring opening to produce yaequinolone C) into yaequinolone D. Finally, the short-chain dehydrogenase/reductase (SDR)-like reductase penD, catalyzes both the dehydration of yaequinolone D and the reduction of the resulting oxonium to yield penigequinolone. This Penicillium thymicola protein is Cytochrome P450 monooxygenase penB.